We begin with the raw amino-acid sequence, 232 residues long: Phosphatidylserine decarboxylase proenzyme (232 aa).

Catalysis depends on serine 190, which acts as the Schiff-base intermediate with substrate; via pyruvic acid. Position 190 is a pyruvic acid (Ser); by autocatalysis (serine 190).

It belongs to the phosphatidylserine decarboxylase family. PSD-A subfamily. As to quaternary structure, heterodimer of a large membrane-associated beta subunit and a small pyruvoyl-containing alpha subunit. It depends on pyruvate as a cofactor. In terms of processing, is synthesized initially as an inactive proenzyme. Formation of the active enzyme involves a self-maturation process in which the active site pyruvoyl group is generated from an internal serine residue via an autocatalytic post-translational modification. Two non-identical subunits are generated from the proenzyme in this reaction, and the pyruvate is formed at the N-terminus of the alpha chain, which is derived from the carboxyl end of the proenzyme. The post-translation cleavage follows an unusual pathway, termed non-hydrolytic serinolysis, in which the side chain hydroxyl group of the serine supplies its oxygen atom to form the C-terminus of the beta chain, while the remainder of the serine residue undergoes an oxidative deamination to produce ammonia and the pyruvoyl prosthetic group on the alpha chain.

It localises to the cell membrane. It carries out the reaction a 1,2-diacyl-sn-glycero-3-phospho-L-serine + H(+) = a 1,2-diacyl-sn-glycero-3-phosphoethanolamine + CO2. It functions in the pathway phospholipid metabolism; phosphatidylethanolamine biosynthesis; phosphatidylethanolamine from CDP-diacylglycerol: step 2/2. Its function is as follows. Catalyzes the formation of phosphatidylethanolamine (PtdEtn) from phosphatidylserine (PtdSer). This chain is Phosphatidylserine decarboxylase proenzyme, found in Allorhizobium ampelinum (strain ATCC BAA-846 / DSM 112012 / S4) (Agrobacterium vitis (strain S4)).